A 216-amino-acid polypeptide reads, in one-letter code: Uracil phosphoribosyltransferase (216 aa).

Residues arginine 85, arginine 110, and 135 to 143 contribute to the 5-phospho-alpha-D-ribose 1-diphosphate site; that span reads DPMVATGYS. Residues isoleucine 200 and 205-207 contribute to the uracil site; that span reads GDA. Position 206 (aspartate 206) interacts with 5-phospho-alpha-D-ribose 1-diphosphate.

Belongs to the UPRTase family. Requires Mg(2+) as cofactor.

The catalysed reaction is UMP + diphosphate = 5-phospho-alpha-D-ribose 1-diphosphate + uracil. Its pathway is pyrimidine metabolism; UMP biosynthesis via salvage pathway; UMP from uracil: step 1/1. Allosterically activated by GTP. In terms of biological role, catalyzes the conversion of uracil and 5-phospho-alpha-D-ribose 1-diphosphate (PRPP) to UMP and diphosphate. This chain is Uracil phosphoribosyltransferase, found in Burkholderia ambifaria (strain MC40-6).